A 513-amino-acid chain; its full sequence is Probable mannosyl-oligosaccharide alpha-1,2-mannosidase 1B (513 aa).

An N-terminal signal peptide occupies residues 1-21 (MHLSSLSLSLTALAIVSPSAA). N-linked (GlcNAc...) asparagine glycans are attached at residues asparagine 97, asparagine 117, asparagine 184, asparagine 251, asparagine 322, asparagine 348, and asparagine 368. Cysteine 334 and cysteine 363 are disulfide-bonded. The active-site Proton donor is glutamate 377. Threonine 503 contributes to the Ca(2+) binding site.

This sequence belongs to the glycosyl hydrolase 47 family. In terms of assembly, monomer. Requires Ca(2+) as cofactor. Mg(2+) is required as a cofactor.

The protein localises to the cytoplasmic vesicle lumen. It catalyses the reaction N(4)-(alpha-D-Man-(1-&gt;2)-alpha-D-Man-(1-&gt;2)-alpha-D-Man-(1-&gt;3)-[alpha-D-Man-(1-&gt;2)-alpha-D-Man-(1-&gt;3)-[alpha-D-Man-(1-&gt;2)-alpha-D-Man-(1-&gt;6)]-alpha-D-Man-(1-&gt;6)]-beta-D-Man-(1-&gt;4)-beta-D-GlcNAc-(1-&gt;4)-beta-D-GlcNAc)-L-asparaginyl-[protein] (N-glucan mannose isomer 9A1,2,3B1,2,3) + 4 H2O = N(4)-(alpha-D-Man-(1-&gt;3)-[alpha-D-Man-(1-&gt;3)-[alpha-D-Man-(1-&gt;6)]-alpha-D-Man-(1-&gt;6)]-beta-D-Man-(1-&gt;4)-beta-D-GlcNAc-(1-&gt;4)-beta-D-GlcNAc)-L-asparaginyl-[protein] (N-glucan mannose isomer 5A1,2) + 4 beta-D-mannose. The catalysed reaction is N(4)-(alpha-D-Man-(1-&gt;2)-alpha-D-Man-(1-&gt;2)-alpha-D-Man-(1-&gt;3)-[alpha-D-Man-(1-&gt;3)-[alpha-D-Man-(1-&gt;2)-alpha-D-Man-(1-&gt;6)]-alpha-D-Man-(1-&gt;6)]-beta-D-Man-(1-&gt;4)-beta-D-GlcNAc-(1-&gt;4)-beta-D-GlcNAc)-L-asparaginyl-[protein] (N-glucan mannose isomer 8A1,2,3B1,3) + 3 H2O = N(4)-(alpha-D-Man-(1-&gt;3)-[alpha-D-Man-(1-&gt;3)-[alpha-D-Man-(1-&gt;6)]-alpha-D-Man-(1-&gt;6)]-beta-D-Man-(1-&gt;4)-beta-D-GlcNAc-(1-&gt;4)-beta-D-GlcNAc)-L-asparaginyl-[protein] (N-glucan mannose isomer 5A1,2) + 3 beta-D-mannose. It functions in the pathway protein modification; protein glycosylation. Functionally, involved in the maturation of Asn-linked oligosaccharides. Progressively trims alpha-1,2-linked mannose residues from Man(9)GlcNAc(2) to produce Man(5)GlcNAc(2). The chain is Probable mannosyl-oligosaccharide alpha-1,2-mannosidase 1B (mns1B) from Aspergillus niger (strain ATCC MYA-4892 / CBS 513.88 / FGSC A1513).